Here is a 278-residue protein sequence, read N- to C-terminus: S-methyl-5'-thioadenosine phosphorylase (278 aa).

Phosphate is bound by residues Ser13, Arg55 to His56, and Thr88 to Ala89. Met190 contacts substrate. Position 191 (Thr191) interacts with phosphate. Asp214–Asp216 is a substrate binding site.

This sequence belongs to the PNP/MTAP phosphorylase family. MTAP subfamily. Homotrimer.

It is found in the cytoplasm. The protein localises to the nucleus. It catalyses the reaction S-methyl-5'-thioadenosine + phosphate = 5-(methylsulfanyl)-alpha-D-ribose 1-phosphate + adenine. Its pathway is amino-acid biosynthesis; L-methionine biosynthesis via salvage pathway; S-methyl-5-thio-alpha-D-ribose 1-phosphate from S-methyl-5'-thioadenosine (phosphorylase route): step 1/1. Functionally, catalyzes the reversible phosphorylation of S-methyl-5'-thioadenosine (MTA) to adenine and 5-methylthioribose-1-phosphate. Involved in the breakdown of MTA, a major by-product of polyamine biosynthesis. Responsible for the first step in the methionine salvage pathway after MTA has been generated from S-adenosylmethionine. Has broad substrate specificity with 6-aminopurine nucleosides as preferred substrates. The chain is S-methyl-5'-thioadenosine phosphorylase from Anopheles gambiae (African malaria mosquito).